Reading from the N-terminus, the 407-residue chain is Methylthioribose kinase (407 aa).

ATP-binding positions include Asn40, Lys57, and 111–113; that span reads EDL. Asp229 lines the substrate pocket. 246-248 is an ATP binding site; sequence DAE. Arg344 contacts substrate.

It belongs to the methylthioribose kinase family. As to quaternary structure, homodimer.

The catalysed reaction is 5-(methylsulfanyl)-D-ribose + ATP = 5-(methylsulfanyl)-alpha-D-ribose 1-phosphate + ADP + H(+). It participates in amino-acid biosynthesis; L-methionine biosynthesis via salvage pathway; S-methyl-5-thio-alpha-D-ribose 1-phosphate from S-methyl-5'-thioadenosine (hydrolase route): step 2/2. In terms of biological role, catalyzes the phosphorylation of methylthioribose into methylthioribose-1-phosphate. In Yersinia pseudotuberculosis serotype IB (strain PB1/+), this protein is Methylthioribose kinase.